Reading from the N-terminus, the 498-residue chain is Protein adenylyltransferase Fic (498 aa).

The chain crosses the membrane as a helical span at residues 43-63 (FAFLAFLAGSFLAFSLHALIS). TPR repeat units lie at residues 126–159 (ALSS…APRH) and 160–194 (PEVL…NPSH). The Inhibitory (S/T)XXXE(G/N) motif signature appears at 251-256 (SVGIEG). ATP is bound by residues E255 and 336–339 (VGGH). The region spanning 305–440 (ITIKDILELH…IRPFVRFIAD (136 aa)) is the Fido domain. Residue H383 is part of the active site. ATP is bound by residues 387–394 (DGNGRTSR), 419–420 (YY), and N427.

Belongs to the fic family. Homodimer.

The protein resides in the membrane. The catalysed reaction is L-tyrosyl-[protein] + ATP = O-(5'-adenylyl)-L-tyrosyl-[protein] + diphosphate. It carries out the reaction L-threonyl-[protein] + ATP = 3-O-(5'-adenylyl)-L-threonyl-[protein] + diphosphate. It catalyses the reaction 3-O-(5'-adenylyl)-L-threonyl-[protein] + H2O = L-threonyl-[protein] + AMP + H(+). With respect to regulation, the side chain of Glu-255 determines which of the two opposing activities (AMPylase or de-AMPylase) will take place. In response to endoplasmic reticulum stress, mediates de-AMPylase activity. Adenylyltransferase activity is inhibited by the inhibitory helix present at the N-terminus: Glu-255 binds ATP and competes with ATP-binding at Arg-394, thereby preventing adenylyltransferase activity. In unstressed cells, disengagement of Glu-255 promotes adenylyltransferase activity. Activation dissociates ATP-binding from Glu-255, allowing ordered binding of the entire ATP moiety with the alpha-phosphate in an orientation that is productive for accepting an incoming target hydroxyl side chain. Functionally, protein that can both mediate the addition of adenosine 5'-monophosphate (AMP) to specific residues of target proteins (AMPylation), and the removal of the same modification from target proteins (de-AMPylation), depending on the context. The side chain of Glu-255 determines which of the two opposing activities (AMPylase or de-AMPylase) will take place. Acts as a key regulator of the unfolded protein response (UPR) by mediating AMPylation or de-AMPylation of Hsc70-3/BiP. In unstressed cells, acts as an adenylyltransferase by mediating AMPylation of Hsc70-3/BiP at 'Thr-518', thereby inactivating it. In response to endoplasmic reticulum stress, acts as a phosphodiesterase by mediating removal of ATP (de-AMPylation) from Hsc70-3/BiP at 'Thr-518', leading to restore HSPA5/BiP activity. The sequence is that of Protein adenylyltransferase Fic from Drosophila willistoni (Fruit fly).